The following is a 433-amino-acid chain: AP-2 complex subunit mu (433 aa).

Residues 168 to 432 enclose the MHD domain; sequence RNELFLDVLE…IGRSGIYETR (265 aa). A 1,2-diacyl-sn-glycero-3-phospho-(1D-myo-inositol-3,4,5-trisphosphate) contacts are provided by lysine 339, lysine 343, and lysine 352.

It belongs to the adaptor complexes medium subunit family. In terms of assembly, adaptor protein complex 2 (AP-2) is a heterotetramer composed of two large adaptins (alpha-type subunit and beta-type subunit), a medium adaptin (mu-type subunit) and a small adaptin (sigma-type subunit).

It localises to the cell membrane. The protein localises to the membrane. It is found in the coated pit. In terms of biological role, component of the adaptor complexes which link clathrin to receptors in coated vesicles. Clathrin-associated protein complexes are believed to interact with the cytoplasmic tails of membrane proteins, leading to their selection and concentration. AP50 is a subunit of the plasma membrane adaptor. The complex binds polyphosphoinositide-containing lipids. This chain is AP-2 complex subunit mu (AP2M1), found in Gallus gallus (Chicken).